The chain runs to 452 residues: Elongation factor Tu, mitochondrial (452 aa).

The transit peptide at 1-43 directs the protein to the mitochondrion; it reads MAAATLLRATPRFSGLCASPTPFLQGRLRPLKAPASPFLCRGL. The tr-type G domain maps to 55–251; it reads KPHVNVGTIG…AVDTYIPVPT (197 aa). Residues 64–71 form a G1 region; sequence GHVDHGKT. Residues Asp-67, Gly-69, Lys-70, Thr-71, and Thr-72 each contribute to the GTP site. Thr-71 contributes to the Mg(2+) binding site. Lys-79 carries the N6-acetyllysine modification. At Lys-88 the chain carries N6-acetyllysine; alternate. An N6-succinyllysine; alternate modification is found at Lys-88. The tract at residues 105–109 is G2; sequence GITIN. Residues 126–129 are G3; it reads DCPG. Residues Asn-181, Asp-184, Ser-219, Ala-220, and Leu-221 each coordinate GTP. Residues 181 to 184 are G4; that stretch reads NKAD. A G5 region spans residues 219 to 221; it reads SAL. At Lys-234 the chain carries N6-succinyllysine. Lys-256 is subject to N6-acetyllysine. A Phosphothreonine modification is found at Thr-278. The residue at position 286 (Lys-286) is an N6-succinyllysine. Ser-312 is subject to Phosphoserine. 2 positions are modified to N6-acetyllysine: Lys-361 and Lys-418.

This sequence belongs to the TRAFAC class translation factor GTPase superfamily. Classic translation factor GTPase family. EF-Tu/EF-1A subfamily. As to quaternary structure, interacts with NLRX1. Interacts with ATG16L1.

Its subcellular location is the mitochondrion. It carries out the reaction GTP + H2O = GDP + phosphate + H(+). Its function is as follows. GTP hydrolase that promotes the GTP-dependent binding of aminoacyl-tRNA to the A-site of ribosomes during protein biosynthesis. Also plays a role in the regulation of autophagy and innate immunity. Recruits ATG5-ATG12 and NLRX1 at mitochondria and serves as a checkpoint of the RIGI-MAVS pathway. In turn, inhibits RLR-mediated type I interferon while promoting autophagy. The polypeptide is Elongation factor Tu, mitochondrial (Tufm) (Mus musculus (Mouse)).